We begin with the raw amino-acid sequence, 264 residues long: 3-methyl-2-oxobutanoate hydroxymethyltransferase (264 aa).

2 residues coordinate Mg(2+): D45 and D84. 3-methyl-2-oxobutanoate-binding positions include 45–46, D84, and K112; that span reads DS. Mg(2+) is bound at residue E114. The Proton acceptor role is filled by E181.

This sequence belongs to the PanB family. As to quaternary structure, homodecamer; pentamer of dimers. Mg(2+) serves as cofactor.

It is found in the cytoplasm. It catalyses the reaction 3-methyl-2-oxobutanoate + (6R)-5,10-methylene-5,6,7,8-tetrahydrofolate + H2O = 2-dehydropantoate + (6S)-5,6,7,8-tetrahydrofolate. Its pathway is cofactor biosynthesis; (R)-pantothenate biosynthesis; (R)-pantoate from 3-methyl-2-oxobutanoate: step 1/2. Catalyzes the reversible reaction in which hydroxymethyl group from 5,10-methylenetetrahydrofolate is transferred onto alpha-ketoisovalerate to form ketopantoate. The polypeptide is 3-methyl-2-oxobutanoate hydroxymethyltransferase (Escherichia coli O17:K52:H18 (strain UMN026 / ExPEC)).